A 180-amino-acid chain; its full sequence is Segregation and condensation protein B (180 aa).

Belongs to the ScpB family. As to quaternary structure, homodimer. Homodimerization may be required to stabilize the binding of ScpA to the Smc head domains. Component of a cohesin-like complex composed of ScpA, ScpB and the Smc homodimer, in which ScpA and ScpB bind to the head domain of Smc. The presence of the three proteins is required for the association of the complex with DNA.

It is found in the cytoplasm. Functionally, participates in chromosomal partition during cell division. May act via the formation of a condensin-like complex containing Smc and ScpA that pull DNA away from mid-cell into both cell halves. The protein is Segregation and condensation protein B of Staphylococcus aureus (strain USA300).